We begin with the raw amino-acid sequence, 609 residues long: ATP-dependent lipid A-core flippase (609 aa).

6 helical membrane passes run Leu47–Ile67, Ile88–Phe108, Ala167–Val187, Trp190–Ile210, Val279–Gly299, and Gly305–Leu325. In terms of domain architecture, ABC transmembrane type-1 spans Leu47–Lys340. Residues Val372 to Ser606 enclose the ABC transporter domain. Gly404–Thr411 lines the ATP pocket.

Belongs to the ABC transporter superfamily. Lipid exporter (TC 3.A.1.106) family. As to quaternary structure, homodimer.

Its subcellular location is the cell inner membrane. The catalysed reaction is ATP + H2O + lipid A-core oligosaccharideSide 1 = ADP + phosphate + lipid A-core oligosaccharideSide 2.. In terms of biological role, involved in lipopolysaccharide (LPS) biosynthesis. Translocates lipid A-core from the inner to the outer leaflet of the inner membrane. Transmembrane domains (TMD) form a pore in the inner membrane and the ATP-binding domain (NBD) is responsible for energy generation. This is ATP-dependent lipid A-core flippase from Francisella tularensis subsp. holarctica (strain LVS).